A 503-amino-acid chain; its full sequence is Maturase K (503 aa).

Belongs to the intron maturase 2 family. MatK subfamily.

Its subcellular location is the plastid. It localises to the chloroplast. In terms of biological role, usually encoded in the trnK tRNA gene intron. Probably assists in splicing its own and other chloroplast group II introns. This chain is Maturase K, found in Lathyrus vestitus (Pacific pea).